The sequence spans 152 residues: Deoxyuridine 5'-triphosphate nucleotidohydrolase (152 aa).

Residues 71-73, N84, 88-90, and M98 contribute to the substrate site; these read RSG and LID.

This sequence belongs to the dUTPase family. The cofactor is Mg(2+).

The enzyme catalyses dUTP + H2O = dUMP + diphosphate + H(+). Its pathway is pyrimidine metabolism; dUMP biosynthesis; dUMP from dCTP (dUTP route): step 2/2. Its function is as follows. This enzyme is involved in nucleotide metabolism: it produces dUMP, the immediate precursor of thymidine nucleotides and it decreases the intracellular concentration of dUTP so that uracil cannot be incorporated into DNA. This chain is Deoxyuridine 5'-triphosphate nucleotidohydrolase, found in Coxiella burnetii (strain RSA 331 / Henzerling II).